Consider the following 242-residue polypeptide: Ubiquinone biosynthesis O-methyltransferase (242 aa).

R36, G56, D77, and M130 together coordinate S-adenosyl-L-methionine.

It belongs to the methyltransferase superfamily. UbiG/COQ3 family.

The enzyme catalyses a 3-demethylubiquinol + S-adenosyl-L-methionine = a ubiquinol + S-adenosyl-L-homocysteine + H(+). The catalysed reaction is a 3-(all-trans-polyprenyl)benzene-1,2-diol + S-adenosyl-L-methionine = a 2-methoxy-6-(all-trans-polyprenyl)phenol + S-adenosyl-L-homocysteine + H(+). It participates in cofactor biosynthesis; ubiquinone biosynthesis. Its function is as follows. O-methyltransferase that catalyzes the 2 O-methylation steps in the ubiquinone biosynthetic pathway. The protein is Ubiquinone biosynthesis O-methyltransferase of Pasteurella multocida (strain Pm70).